Here is a 351-residue protein sequence, read N- to C-terminus: MEQAIINDEREYLRHFWHPVCTVTELEKAHPSSLGPLAVKLLNEQLVVAKLGDEYVAMRDRCAHRSAKLSLGTVSGNRLQCPYHGWQYDTHGACQLVPACPNSPIPNKAKVDRFDCEERYGLIWIRLDSSFDCTEIPYFSAANDPRLRIVIQEPYWWDATAERRWENFTDFSHFAFIHPGTLFDPNNAEPPIVPMDRFNGQFRFVYDTPEDMAVPNQAPIGSFSYTCSMPFAINLEVSKYSSSSLHVLFNVSCPVDSHTTKNFLIFAREQSDDSDYLHIAFNDLVFAEDKPVIESQWPKDAPADEVSVVADKVSIQYRKWLRELKEAHKEGSQAFRSALLDPVIESDRSYI.

Positions 17–125 (WHPVCTVTEL…CEERYGLIWI (109 aa)) constitute a Rieske domain. Residues Cys-62, His-64, Cys-81, and His-84 each contribute to the [2Fe-2S] cluster site.

It depends on [2Fe-2S] cluster as a cofactor.

The catalysed reaction is caffeine + NADH + O2 + H(+) = theobromine + formaldehyde + NAD(+) + H2O. It catalyses the reaction caffeine + NADPH + O2 + H(+) = theobromine + formaldehyde + NADP(+) + H2O. The enzyme catalyses theophylline + NADH + O2 + H(+) = 3-methylxanthine + formaldehyde + NAD(+) + H2O. It carries out the reaction theophylline + NADPH + O2 + H(+) = 3-methylxanthine + formaldehyde + NADP(+) + H2O. The catalysed reaction is 1,7-dimethylxanthine + NADH + O2 + H(+) = 7-methylxanthine + formaldehyde + NAD(+) + H2O. It catalyses the reaction 1,7-dimethylxanthine + NADPH + O2 + H(+) = 7-methylxanthine + formaldehyde + NADP(+) + H2O. It functions in the pathway alkaloid degradation. Its function is as follows. Involved in the caffeine degradation, which is the essential first step for assimilating the carbon and nitrogen in caffeine. Catalyzes the N1-demethylation of caffeine to produce theobromine and formaldehyde. Also catalyzes the N1-demethylation of theophylline, paraxanthine, and 1-methylxanthine to 3-methylxanthine, 7-methylxanthine, and xanthine, respectively. NADH is the preferred substrate. This chain is Methylxanthine N1-demethylase NdmA (ndmA), found in Pseudomonas putida (Arthrobacter siderocapsulatus).